The following is a 364-amino-acid chain: Geranylgeranyl pyrophosphate synthase janG (364 aa).

Residues Lys-83, Arg-86, and His-115 each contribute to the isopentenyl diphosphate site. Positions 122 and 126 each coordinate Mg(2+). A dimethylallyl diphosphate-binding site is contributed by Arg-131. Arg-132 lines the isopentenyl diphosphate pocket. 3 residues coordinate dimethylallyl diphosphate: Lys-209, Thr-210, and Gln-243. Asp-246 is a Mg(2+) binding site. Asn-250, Lys-260, and Lys-270 together coordinate dimethylallyl diphosphate.

Belongs to the FPP/GGPP synthase family. Requires Mg(2+) as cofactor.

The catalysed reaction is isopentenyl diphosphate + dimethylallyl diphosphate = (2E)-geranyl diphosphate + diphosphate. It catalyses the reaction isopentenyl diphosphate + (2E)-geranyl diphosphate = (2E,6E)-farnesyl diphosphate + diphosphate. The enzyme catalyses isopentenyl diphosphate + (2E,6E)-farnesyl diphosphate = (2E,6E,10E)-geranylgeranyl diphosphate + diphosphate. Its pathway is secondary metabolite biosynthesis. In terms of biological role, geranylgeranyl pyrophosphate synthase; part of the gene cluster that mediates the biosynthesis of the indole diterpenes janthitremanes such as shearinine K or shearinine A. The geranylgeranyl diphosphate (GGPP) synthase janG catalyzes the first step in janthitremane biosynthesis via conversion of farnesyl pyrophosphate and isopentyl pyrophosphate into geranylgeranyl pyrophosphate (GGPP). Condensation of indole-3-glycerol phosphate with GGPP by the prenyl transferase janC then forms 3-geranylgeranylindole (3-GGI). Epoxidation by the FAD-dependent monooxygenase janM leads to a epoxidized-GGI that is substrate of the terpene cyclase janB for cyclization to yield paspaline. Paspaline is subsequently converted to 13-desoxypaspaline by the cytochrome P450 monooxygenase janP, via beta-PC-M6 in a series of alpha-face oxidations. The cytochrome P450 monooxygenase janQ is proposed to carry out sequential beta-face oxidation steps at C-7 and C-13 of 13-desoxypaspaline to form paspalicine and paspalinine respectively. The indole diterpene prenyltransferase janD may then convert paspalinine into shearinine K which is substrate of janO and/or additional enzymes for oxidation and cyclization to generate shearinine A. The protein is Geranylgeranyl pyrophosphate synthase janG of Penicillium janthinellum (Penicillium vitale).